Consider the following 1247-residue polypeptide: Protein jagged-2 (1247 aa).

Positions 1-23 (MRARGWGRLPRRLLLLLVLCVQA) are cleaved as a signal peptide. The Extracellular portion of the chain corresponds to 24–1082 (TRPMGYFELQ…ETVVMGGSST (1059 aa)). The N-linked (GlcNAc...) asparagine glycan is linked to N153. A DSL domain is found at 196 to 240 (VRCDENYYSATCNKFCRPRNDFFGHYTCDQYGNKACMDGWMGKEC). 42 disulfides stabilise this stretch: C198/C207, C211/C223, C231/C240, C245/C256, C249/C262, C264/C273, C276/C287, C282/C293, C295/C304, C311/C323, C317/C333, C335/C344, C351/C362, C356/C371, C373/C382, C389/C400, C394/C409, C411/C420, C427/C438, C432/C447, C449/C458, C465/C475, C469/C484, C486/C495, C502/C513, C507/C522, C524/C533, C540/C551, C545/C560, C562/C571, C589/C612, C606/C622, C624/C633, C640/C651, C645/C660, C662/C671, C678/C689, C683/C698, C700/C709, C716/C727, C721/C736, and C738/C747. Residues 241 to 274 (KEAVCKQGCNLLHGGCTVPGECRCSYGWQGKFCD) form the EGF-like 1 domain. The region spanning 275–305 (ECVPYPGCVHGSCVEPWHCDCETNWGGLLCD) is the EGF-like 2; atypical domain. EGF-like domains lie at 307 to 345 (DLNY…KNCE) and 347 to 383 (AEHA…PTCA). One can recognise an EGF-like 5; calcium-binding domain in the interval 385–421 (DIDECASNPCAAGGTCVDQVDGFECICPEQWVGATCQ). The region spanning 423 to 459 (DANECEGKPCLNAFSCKNLIGGYYCDCLPGWKGINCQ) is the EGF-like 6; calcium-binding domain. Positions 461 to 496 (NINDCHGQCQHGGTCKDLVNGYQCVCPRGFGGRHCE) constitute an EGF-like 7; calcium-binding domain. EGF-like domains lie at 498–534 (EYDK…LHCE) and 536–572 (DMDL…KNCS). The N-linked (GlcNAc...) asparagine glycan is linked to N570. Residues 574–634 (PRDTCPGGAC…DSGFTGTYCH (61 aa)) enclose the EGF-like 10; atypical domain. A glycan (N-linked (GlcNAc...) asparagine) is linked at N619. Residues 636–672 (NIDDCMGQPCRNGGTCIDEVDSFRCFCPSGWEGELCD) form the EGF-like 11; calcium-binding domain. The EGF-like 12; calcium-binding domain maps to 674–710 (NPNDCLPDPCHSRGRCYDLVNDFYCACDDGWKGKTCH). 2 EGF-like domains span residues 712–748 (REFQ…STCT) and 751–787 (KNSS…RTCT). A glycan (N-linked (GlcNAc...) asparagine) is linked at N752. 9 disulfide bridges follow: C755-C766, C760-C775, C777-C786, C793-C804, C798-C813, C815-C824, C831-C842, C836-C851, and C853-C862. The EGF-like 15; calcium-binding domain occupies 789–825 (NTNDCNPLPCYNGGICVDGVNWFRCECAPGFAGPDCR). In terms of domain architecture, EGF-like 16; calcium-binding spans 827–863 (NIDECQSSPCAYGATCVDEINGYRCSCPPGRSGPRCQ). N1060 carries an N-linked (GlcNAc...) asparagine glycan. A helical transmembrane segment spans residues 1083–1103 (GLLVPVLCSVFSVLWLACVVI). The Cytoplasmic portion of the chain corresponds to 1104 to 1247 (CVWWTRKRRK…TKDVRRAGRE (144 aa)). 3 stretches are compositionally biased toward basic and acidic residues: residues 1115–1125 (RERSRLPRDES), 1192–1212 (LSRG…KFTK), and 1230–1247 (VDNR…AGRE). Disordered stretches follow at residues 1115–1148 (RERS…GSGL) and 1167–1247 (PRRA…AGRE). The residue at position 1125 (S1125) is a Phosphoserine.

Found to be highest in fetal thymus, epidermis, foregut dorsal root ganglia and inner ear. In 2-weeK-old mice, abundant in heart, lung, thymus, skeletal muscle, brain and testis. Expression overlaps partially with Notch1 expression.

Its subcellular location is the membrane. Functionally, putative Notch ligand involved in the mediation of Notch signaling. Plays an essential role during limb, craniofacial and thymic development. May be involved in myogenesis and in the development of peripheral and central nervous systems. This Mus musculus (Mouse) protein is Protein jagged-2 (Jag2).